The sequence spans 461 residues: tRNA modification GTPase MnmE (461 aa).

R27, E89, and R128 together coordinate (6S)-5-formyl-5,6,7,8-tetrahydrofolate. A TrmE-type G domain is found at G224–F382. N234 provides a ligand contact to K(+). Residues N234–S239, T253–T259, and D278–G281 contribute to the GTP site. S238 is a binding site for Mg(2+). K(+)-binding residues include T253, V255, and T258. Mg(2+) is bound at residue T259. K461 contributes to the (6S)-5-formyl-5,6,7,8-tetrahydrofolate binding site.

This sequence belongs to the TRAFAC class TrmE-Era-EngA-EngB-Septin-like GTPase superfamily. TrmE GTPase family. Homodimer. Heterotetramer of two MnmE and two MnmG subunits. It depends on K(+) as a cofactor.

It localises to the cytoplasm. Exhibits a very high intrinsic GTPase hydrolysis rate. Involved in the addition of a carboxymethylaminomethyl (cmnm) group at the wobble position (U34) of certain tRNAs, forming tRNA-cmnm(5)s(2)U34. The polypeptide is tRNA modification GTPase MnmE (Lactobacillus acidophilus (strain ATCC 700396 / NCK56 / N2 / NCFM)).